The chain runs to 318 residues: Pyrimidine-specific ribonucleoside hydrolase RihA (318 aa).

Residue histidine 240 is part of the active site.

It belongs to the IUNH family. RihA subfamily.

Functionally, hydrolyzes cytidine or uridine to ribose and cytosine or uracil, respectively. In Shewanella sp. (strain MR-4), this protein is Pyrimidine-specific ribonucleoside hydrolase RihA.